A 576-amino-acid polypeptide reads, in one-letter code: Arginine--tRNA ligase (576 aa).

The 'HIGH' region signature appears at 122-132 (PNVAKEMHVGH).

The protein belongs to the class-I aminoacyl-tRNA synthetase family. In terms of assembly, monomer.

It localises to the cytoplasm. The catalysed reaction is tRNA(Arg) + L-arginine + ATP = L-arginyl-tRNA(Arg) + AMP + diphosphate. The protein is Arginine--tRNA ligase of Thermobifida fusca (strain YX).